We begin with the raw amino-acid sequence, 594 residues long: MKNIRNFSIIAHIDHGKSTLSDRFIQVCNGLSEREMKEQVLDSMDIERERGITIKAQSVTLDYTARDGQTYQLNFIDTPGHVDFSYEVSRSLAACEGALLVVDAAQGVEAQTVANCYTAIEQNLEVIPILNKIDLPFAEPDRVAQEIEEIIGIDATGATTCSAKIGIGVEDVLETIVAKVPAPEGDVNAKLQALIIDSWFDNYLGVVSLVRVKNGTIKKGEKFKVMSTGVAYQVDRLGVFTPKMKDLDHLKAGEVGFIVAGIKDIHGAPVGDTLTHAHNPTDKPVPGFKKVQPQVYAGMFTISSDDYPDFREALEKLSLNDASLFFEPEVSQALGFGFRCGFLGMLHMEIIQERLEREYNLDLITSAPTVVYKAIKKDGEIIEVDNLSKLPEPGAIAEIQEPIVRANILVPKDYVGSVITICIEKRGVQVDLNYVGNQVSITYDLPMIEVVSDFFDTLKSVTKGYGSLDYELIRYEPANMVCLDVLINGDKVDALASIVHKDQAKYKGRELVERLKELIPRQMFEVAIQAAIGGTIVARSTVKALRKNVLAKCYGGDVSRKKKLLEKQKEGKKRMKNIGSVEIPQEAFLSVLKK.

The 183-residue stretch at 2-184 (KNIRNFSIIA…TIVAKVPAPE (183 aa)) folds into the tr-type G domain. Residues 14–19 (DHGKST) and 131–134 (NKID) each bind GTP.

This sequence belongs to the TRAFAC class translation factor GTPase superfamily. Classic translation factor GTPase family. LepA subfamily.

It is found in the cell inner membrane. The catalysed reaction is GTP + H2O = GDP + phosphate + H(+). Required for accurate and efficient protein synthesis under certain stress conditions. May act as a fidelity factor of the translation reaction, by catalyzing a one-codon backward translocation of tRNAs on improperly translocated ribosomes. Back-translocation proceeds from a post-translocation (POST) complex to a pre-translocation (PRE) complex, thus giving elongation factor G a second chance to translocate the tRNAs correctly. Binds to ribosomes in a GTP-dependent manner. This chain is Elongation factor 4, found in Francisella tularensis subsp. holarctica (strain FTNF002-00 / FTA).